Consider the following 504-residue polypeptide: Glutamate--tRNA ligase (504 aa).

A 'HIGH' region motif is present at residues 10-20 (PSPTGDPHVGT). The 'KMSKS' region motif lies at 251 to 255 (KLSKR). Lys254 contacts ATP.

It belongs to the class-I aminoacyl-tRNA synthetase family. Glutamate--tRNA ligase type 1 subfamily. In terms of assembly, monomer.

Its subcellular location is the cytoplasm. The enzyme catalyses tRNA(Glu) + L-glutamate + ATP = L-glutamyl-tRNA(Glu) + AMP + diphosphate. In terms of biological role, catalyzes the attachment of glutamate to tRNA(Glu) in a two-step reaction: glutamate is first activated by ATP to form Glu-AMP and then transferred to the acceptor end of tRNA(Glu). The chain is Glutamate--tRNA ligase from Cellvibrio japonicus (strain Ueda107) (Pseudomonas fluorescens subsp. cellulosa).